The sequence spans 268 residues: MDQEQTPHSPTRHSRSPPSSASGSTSAEPVRSRWSPKPEQILILESIFHSGMVNPPKEETVRIRKMLEKFGAVGDANVFYWFQNRRSRSRRRQRQLQAAAAAADATTNTCDQTMMVSNSLPHHSGSDLGFGGCSTSSNYLFASSSSSYGGGCDNQSNSGMENLLTMSGQMSYHEATHHHYQNHSSNVTSILCPSDQNSNFQYQQGAITVFINGVPTEVTRGGIDMKATFGEDLVLVHSSGVPLPTDEFGFLMHSLQHGEAYFLVPRQT.

The segment at 1–35 (MDQEQTPHSPTRHSRSPPSSASGSTSAEPVRSRWS) is disordered. A compositionally biased stretch (low complexity) spans 16-27 (SPPSSASGSTSA). Positions 29–93 (PVRSRWSPKP…NRRSRSRRRQ (65 aa)) form a DNA-binding region, homeobox; WUS-type.

Belongs to the WUS homeobox family.

The protein localises to the nucleus. Its function is as follows. Transcription factor which may be involved in developmental processes. This Arabidopsis thaliana (Mouse-ear cress) protein is WUSCHEL-related homeobox 11 (WOX11).